The primary structure comprises 206 residues: Uridine kinase (206 aa).

Glycine 11–serine 18 lines the ATP pocket.

It belongs to the uridine kinase family.

The protein localises to the cytoplasm. The enzyme catalyses uridine + ATP = UMP + ADP + H(+). It catalyses the reaction cytidine + ATP = CMP + ADP + H(+). It participates in pyrimidine metabolism; CTP biosynthesis via salvage pathway; CTP from cytidine: step 1/3. Its pathway is pyrimidine metabolism; UMP biosynthesis via salvage pathway; UMP from uridine: step 1/1. The chain is Uridine kinase from Clostridium botulinum (strain Kyoto / Type A2).